The primary structure comprises 166 residues: MDMTNAQRLILSNQYYLMSQMDPTNAEKYKRQQLIVERGYELQIRELDKDFGCITETECREIIDFMEMYHAMQESYNMLSEECQAKVDARRLQFLGFDIATEAQQVNYVRFLTSSEGLYPQFDKADHHFNSQMPMLDKYRRMLTTWRNCPRQYHLCSTELAQIFNA.

It belongs to the UPF0304 family.

In Aliivibrio fischeri (strain ATCC 700601 / ES114) (Vibrio fischeri), this protein is UPF0304 protein VF_1794.